We begin with the raw amino-acid sequence, 731 residues long: MVKPKYKGRSTINPSKASTNPDRVQGAGGQNMRDRATIRRLNMYRQKERRNSRGKIIKPLQYQSTVASGTVARVEPNIKWFGNTRVIKQSSLQKFQEEMDTVMKDPYKVVMKQSKLPMSLLHDRIRPHNLKVHILDTESFETTFGPKSQRKRPNLFASDMQSLIENAEMSTESYDQGKDRDLVTEDTGVRNEAQEEIYKKGQSKRIWGELYKVIDSSDVVVQVLDARDPMGTRSPHIETYLKKEKPWKHLIFVLNKCDLVPTWATKRWVAVLSQDYPTLAFHASLTNPFGKGAFIQLLRQFGKLHTDKKQISVGFIGYPNVGKSSVINTLRSKKVCNVAPIAGETKVWQYITLMRRIFLIDCPGVVYPSEDSETDIVLKGVVQVEKIKSPEDHIGAVLERAKPEYISKTYKIDSWENAEDFLEKLAFRTGKLLKGGEPDLQTVGKMVLNDWQRGRIPFFVKPPNAEPLVAPQLLPSSSLEVVPEAAQNNPGEEVTETAGEGSESIIKEETEENSHCDANTEMQQILTRVRQNFGKINVVPQFSGDDLVPVEVSDLEEELESFSDEEEEEQEQQRDDAEESSSEPEEENVGNDTKAVIKALDEKIAKYQKFLDKAKAKKFSAVRISKGLSEKIFAKPEEQRKTLEEDVDDRAPSKKGKKRKAQREEEQEHSNKAPRALTSKERRRAVRQQRPKKVGVRYYETHNVKNRNRNKKKTNDSEGQKHKRKKFRQKQ.

An N-acetylmethionine modification is found at M1. Positions 1–33 are disordered; that stretch reads MVKPKYKGRSTINPSKASTNPDRVQGAGGQNMR. Over residues 10 to 22 the composition is skewed to polar residues; sequence STINPSKASTNPD. Residues 207-368 enclose the CP-type G domain; that stretch reads WGELYKVIDS…LIDCPGVVYP (162 aa). GTP contacts are provided by residues 317–324 and 361–365; these read GYPNVGKS and DCPGV. A disordered region spans residues 481 to 502; it reads VVPEAAQNNPGEEVTETAGEGS. S504 carries the post-translational modification Phosphoserine. Acidic residues predominate over residues 555 to 589; that stretch reads LEEELESFSDEEEEEQEQQRDDAEESSSEPEEENV. 2 disordered regions span residues 555–594 and 630–731; these read LEEELESFSDEEEEEQEQQRDDAEESSSEPEEENVGNDTK and EKIF…RQKQ. Basic and acidic residues-rich tracts occupy residues 630-652 and 662-671; these read EKIFAKPEEQRKTLEEDVDDRAP and QREEEQEHSN. 2 stretches are compositionally biased toward basic residues: residues 681 to 695 and 721 to 731; these read ERRRAVRQQRPKKVG and KHKRKKFRQKQ.

This sequence belongs to the TRAFAC class YlqF/YawG GTPase family. NOG2 subfamily. Interacts with LYAR and RPL23A. Interacts with the nuclear importin-beta receptor and, at a lower extent, with importin-alpha. As to expression, widely expressed, with the highest expression level in testis.

The protein localises to the nucleus. It localises to the nucleolus. Functionally, GTPase that associates with pre-60S ribosomal subunits in the nucleolus and is required for their nuclear export and maturation. May promote cell proliferation possibly by increasing p53/TP53 protein levels, and consequently those of its downstream product CDKN1A/p21, and decreasing RPL23A protein levels. This is Nucleolar GTP-binding protein 2 (GNL2) from Homo sapiens (Human).